A 367-amino-acid chain; its full sequence is Oleoyl-acyl carrier protein thioesterase 2, chloroplastic (367 aa).

A chloroplast-targeting transit peptide spans 1–48 (MLKLSCNVTDHIHNLFSNSRRIFVPVHRQTRPISCFQLKKEPLRAILS). Catalysis depends on residues Asn263, His265, and Cys300.

It belongs to the acyl-ACP thioesterase family.

It is found in the plastid. It localises to the chloroplast. It catalyses the reaction (9Z)-octadecenoyl-[ACP] + H2O = (9Z)-octadecenoate + holo-[ACP] + H(+). Plays an essential role in chain termination during de novo fatty acid synthesis. Possesses high thioesterase activity for oleoyl-ACP versus other acyl-ACPs. In Arabidopsis thaliana (Mouse-ear cress), this protein is Oleoyl-acyl carrier protein thioesterase 2, chloroplastic (FATA2).